The following is a 237-amino-acid chain: Phosphoribosylaminoimidazole-succinocarboxamide synthase (237 aa).

It belongs to the SAICAR synthetase family.

The enzyme catalyses 5-amino-1-(5-phospho-D-ribosyl)imidazole-4-carboxylate + L-aspartate + ATP = (2S)-2-[5-amino-1-(5-phospho-beta-D-ribosyl)imidazole-4-carboxamido]succinate + ADP + phosphate + 2 H(+). Its pathway is purine metabolism; IMP biosynthesis via de novo pathway; 5-amino-1-(5-phospho-D-ribosyl)imidazole-4-carboxamide from 5-amino-1-(5-phospho-D-ribosyl)imidazole-4-carboxylate: step 1/2. This Pseudomonas fluorescens (strain ATCC BAA-477 / NRRL B-23932 / Pf-5) protein is Phosphoribosylaminoimidazole-succinocarboxamide synthase.